The sequence spans 375 residues: CC-adding tRNA nucleotidyltransferase (375 aa).

CTP is bound at residue 27-30 (GAVR). Residues Asp40 and Asp42 each contribute to the Mg(2+) site. CTP is bound by residues 95–96 (RD), Asn100, 137–146 (DPLRMLRAPR), and Arg177.

This sequence belongs to the tRNA nucleotidyltransferase/poly(A) polymerase family. The cofactor is Mg(2+).

The catalysed reaction is a tRNA precursor + 2 CTP = a tRNA with a 3' CC end + 2 diphosphate. In terms of biological role, tRNA nucleotidyltransferase involved in the synthesis of the tRNA CCA terminus. Adds the two cytidine residues to tRNA. The protein is CC-adding tRNA nucleotidyltransferase of Halalkalibacterium halodurans (strain ATCC BAA-125 / DSM 18197 / FERM 7344 / JCM 9153 / C-125) (Bacillus halodurans).